A 452-amino-acid polypeptide reads, in one-letter code: Phosphoglucosamine mutase (452 aa).

Serine 103 serves as the catalytic Phosphoserine intermediate. Mg(2+)-binding residues include serine 103, aspartate 243, aspartate 245, and aspartate 247. Phosphoserine is present on serine 103.

The protein belongs to the phosphohexose mutase family. It depends on Mg(2+) as a cofactor. Post-translationally, activated by phosphorylation.

It catalyses the reaction alpha-D-glucosamine 1-phosphate = D-glucosamine 6-phosphate. Its function is as follows. Catalyzes the conversion of glucosamine-6-phosphate to glucosamine-1-phosphate. The protein is Phosphoglucosamine mutase of Limosilactobacillus fermentum (strain NBRC 3956 / LMG 18251) (Lactobacillus fermentum).